A 158-amino-acid polypeptide reads, in one-letter code: Snaclec crotocetin-1 (158 aa).

An N-terminal signal peptide occupies residues 1–23; the sequence is MGRFIFVSFGLLVVFLSLSGTGA. Intrachain disulfides connect Cys27-Cys38, Cys55-Cys152, and Cys127-Cys144. The C-type lectin domain occupies 34–153; it reads YDQYCYRVIK…CEEKNLFVCK (120 aa).

This sequence belongs to the snaclec family. In terms of assembly, heterodimer; disulfide-linked. In terms of tissue distribution, expressed by the venom gland.

It is found in the secreted. In terms of biological role, interferes with one step of hemostasis (modulation of platelet aggregation, or coagulation cascade, for example). This chain is Snaclec crotocetin-1, found in Crotalus durissus terrificus (South American rattlesnake).